A 172-amino-acid polypeptide reads, in one-letter code: VLLDGNGEVVQNGGTYYLLPQVWAQGGGVQLAKTGEETCPLTVVQSPNELSNGKPIRIESRLRSAFIPDDDKVRIGFAYAPKCAPSPWWTVLEDEQEGLSVKLSEDESTQFDYPFKFEQVSDKLHSYKLLYCEGKHEKCASIGINRDQKGYRRLVVTEDNPLTVVLKKDESS.

Disulfide bonds link C39/C83 and C132/C139.

It belongs to the protease inhibitor I3 (leguminous Kunitz-type inhibitor) family.

Functionally, inhibition of trypsin. The sequence is that of Trypsin inhibitor DE-3 from Erythrina variegata (Indian coral tree).